We begin with the raw amino-acid sequence, 227 residues long: Uracil-DNA glycosylase (227 aa).

Residue Asp-65 is the Proton acceptor of the active site.

The protein belongs to the uracil-DNA glycosylase (UDG) superfamily. UNG family.

Its subcellular location is the cytoplasm. The enzyme catalyses Hydrolyzes single-stranded DNA or mismatched double-stranded DNA and polynucleotides, releasing free uracil.. Excises uracil residues from the DNA which can arise as a result of misincorporation of dUMP residues by DNA polymerase or due to deamination of cytosine. The chain is Uracil-DNA glycosylase from Bacillus velezensis (strain DSM 23117 / BGSC 10A6 / LMG 26770 / FZB42) (Bacillus amyloliquefaciens subsp. plantarum).